The primary structure comprises 196 residues: ATP-dependent Clp protease proteolytic subunit (196 aa).

The active-site Nucleophile is Ser101. The active site involves His126.

Belongs to the peptidase S14 family. As to quaternary structure, component of the chloroplastic Clp protease core complex.

It is found in the plastid. The protein resides in the chloroplast stroma. The catalysed reaction is Hydrolysis of proteins to small peptides in the presence of ATP and magnesium. alpha-casein is the usual test substrate. In the absence of ATP, only oligopeptides shorter than five residues are hydrolyzed (such as succinyl-Leu-Tyr-|-NHMec, and Leu-Tyr-Leu-|-Tyr-Trp, in which cleavage of the -Tyr-|-Leu- and -Tyr-|-Trp bonds also occurs).. In terms of biological role, cleaves peptides in various proteins in a process that requires ATP hydrolysis. Has a chymotrypsin-like activity. Plays a major role in the degradation of misfolded proteins. The polypeptide is ATP-dependent Clp protease proteolytic subunit (Barbarea verna (Land cress)).